The primary structure comprises 332 residues: L-lactate dehydrogenase A chain (332 aa).

Residues 29 to 57 (GAVG…IEDK) and R99 contribute to the NAD(+) site. Substrate-binding residues include R106, N138, and R169. Residue N138 participates in NAD(+) binding. Catalysis depends on H193, which acts as the Proton acceptor. T248 serves as a coordination point for substrate.

This sequence belongs to the LDH/MDH superfamily. LDH family. As to quaternary structure, homotetramer.

The protein localises to the cytoplasm. The catalysed reaction is (S)-lactate + NAD(+) = pyruvate + NADH + H(+). It participates in fermentation; pyruvate fermentation to lactate; (S)-lactate from pyruvate: step 1/1. Functionally, interconverts simultaneously and stereospecifically pyruvate and lactate with concomitant interconversion of NADH and NAD(+). The protein is L-lactate dehydrogenase A chain (LDHA) of Sceloporus woodi (Florida scrub lizard).